Here is a 123-residue protein sequence, read N- to C-terminus: Small ribosomal subunit protein uS12 (123 aa).

3-methylthioaspartic acid is present on D89.

It belongs to the universal ribosomal protein uS12 family. In terms of assembly, part of the 30S ribosomal subunit. Contacts proteins S8 and S17. May interact with IF1 in the 30S initiation complex.

In terms of biological role, with S4 and S5 plays an important role in translational accuracy. Its function is as follows. Interacts with and stabilizes bases of the 16S rRNA that are involved in tRNA selection in the A site and with the mRNA backbone. Located at the interface of the 30S and 50S subunits, it traverses the body of the 30S subunit contacting proteins on the other side and probably holding the rRNA structure together. The combined cluster of proteins S8, S12 and S17 appears to hold together the shoulder and platform of the 30S subunit. This chain is Small ribosomal subunit protein uS12, found in Bradyrhizobium diazoefficiens (strain JCM 10833 / BCRC 13528 / IAM 13628 / NBRC 14792 / USDA 110).